The chain runs to 154 residues: Protein Smg homolog (154 aa).

Belongs to the Smg family.

The chain is Protein Smg homolog from Aromatoleum aromaticum (strain DSM 19018 / LMG 30748 / EbN1) (Azoarcus sp. (strain EbN1)).